Here is a 261-residue protein sequence, read N- to C-terminus: MTALPSPDRPRILVANDDGIFSPGIKALALALADVGDVVVVAPDVEQSAVGHGITIRRPLRFKHTASAGFGTLPAYRVDGTPADCVVLGVHLLGRPDLVVSGINLGSNLGDDLTHSGTVAAAIEGLALGLPSIAFSQQGNGGGEYSFTAGAAYAARLARAVLAKGLPPRVLLNVNFPAGLPRGVRITKVGEHRWEDSIITRHDPEGREYHWVAGQSRAADAHDPDTDYGAVQAGYVSVTPVRLDLTARDLLGELAGYVPEI.

4 residues coordinate a divalent metal cation: aspartate 17, aspartate 18, serine 48, and asparagine 104.

The protein belongs to the SurE nucleotidase family. Requires a divalent metal cation as cofactor.

Its subcellular location is the cytoplasm. It catalyses the reaction a ribonucleoside 5'-phosphate + H2O = a ribonucleoside + phosphate. Functionally, nucleotidase that shows phosphatase activity on nucleoside 5'-monophosphates. The chain is 5'-nucleotidase SurE from Deinococcus geothermalis (strain DSM 11300 / CIP 105573 / AG-3a).